A 329-amino-acid polypeptide reads, in one-letter code: N-acetyl-gamma-glutamyl-phosphate reductase (329 aa).

The active site involves Cys155.

Belongs to the NAGSA dehydrogenase family. Type 1 subfamily.

The protein localises to the cytoplasm. The enzyme catalyses N-acetyl-L-glutamate 5-semialdehyde + phosphate + NADP(+) = N-acetyl-L-glutamyl 5-phosphate + NADPH + H(+). It participates in amino-acid biosynthesis; L-arginine biosynthesis; N(2)-acetyl-L-ornithine from L-glutamate: step 3/4. In terms of biological role, catalyzes the NADPH-dependent reduction of N-acetyl-5-glutamyl phosphate to yield N-acetyl-L-glutamate 5-semialdehyde. This Shewanella piezotolerans (strain WP3 / JCM 13877) protein is N-acetyl-gamma-glutamyl-phosphate reductase.